We begin with the raw amino-acid sequence, 596 residues long: Arginine--tRNA ligase (596 aa).

The 'HIGH' region motif lies at 123 to 133; sequence PNTNKPLHLGH.

This sequence belongs to the class-I aminoacyl-tRNA synthetase family. As to quaternary structure, monomer.

It localises to the cytoplasm. The catalysed reaction is tRNA(Arg) + L-arginine + ATP = L-arginyl-tRNA(Arg) + AMP + diphosphate. The protein is Arginine--tRNA ligase of Amoebophilus asiaticus (strain 5a2).